Here is a 60-residue protein sequence, read N- to C-terminus: Large ribosomal subunit protein bL32 (60 aa).

A disordered region spans residues 1–36 (MAVQQNKKSPSKRGMHRSHNALNTPGLAIEPTTGET). A compositionally biased stretch (basic residues) spans 9 to 19 (SPSKRGMHRSH).

It belongs to the bacterial ribosomal protein bL32 family.

This Methylibium petroleiphilum (strain ATCC BAA-1232 / LMG 22953 / PM1) protein is Large ribosomal subunit protein bL32.